Here is a 218-residue protein sequence, read N- to C-terminus: Pyridoxine/pyridoxamine 5'-phosphate oxidase (218 aa).

Substrate contacts are provided by residues 14–17 (RREY) and lysine 72. FMN contacts are provided by residues 67-72 (RIVLLK), 82-83 (YT), arginine 88, lysine 89, and glutamine 111. Substrate contacts are provided by tyrosine 129, arginine 133, and serine 137. Residues 146-147 (QS) and tryptophan 191 each bind FMN. Residue 197–199 (RLH) coordinates substrate. FMN is bound at residue arginine 201.

Belongs to the pyridoxamine 5'-phosphate oxidase family. As to quaternary structure, homodimer. FMN is required as a cofactor.

The catalysed reaction is pyridoxamine 5'-phosphate + O2 + H2O = pyridoxal 5'-phosphate + H2O2 + NH4(+). The enzyme catalyses pyridoxine 5'-phosphate + O2 = pyridoxal 5'-phosphate + H2O2. Its pathway is cofactor metabolism; pyridoxal 5'-phosphate salvage; pyridoxal 5'-phosphate from pyridoxamine 5'-phosphate: step 1/1. The protein operates within cofactor metabolism; pyridoxal 5'-phosphate salvage; pyridoxal 5'-phosphate from pyridoxine 5'-phosphate: step 1/1. Its function is as follows. Catalyzes the oxidation of either pyridoxine 5'-phosphate (PNP) or pyridoxamine 5'-phosphate (PMP) into pyridoxal 5'-phosphate (PLP). In Enterobacter sp. (strain 638), this protein is Pyridoxine/pyridoxamine 5'-phosphate oxidase.